The chain runs to 609 residues: Alpha-glucosides permease MPH2 (609 aa).

Topologically, residues 1 to 106 (MKNLSFLINR…AAAWSLLVST (106 aa)) are cytoplasmic. Residues 107 to 127 (TLIMEGYDTAILGAFYALPIF) form a helical membrane-spanning segment. At 128-142 (QRKFGSQNDKTGEWE) the chain is on the extracellular side. A helical transmembrane segment spans residues 143-163 (ISASWQIGLTLCYMAGEIVGL). At 164-178 (QLTGPSVDLVGNRYT) the chain is on the cytoplasmic side. A helical membrane pass occupies residues 179–199 (LIIALFFLAAFTFILYFCNSL). Position 200 (Gly200) is a topological domain, extracellular. A helical transmembrane segment spans residues 201-221 (MIAVGQALCGMPWGCFQCLTV). Residues 222-234 (SYASEICPLALRY) lie on the Cytoplasmic side of the membrane. The chain crosses the membrane as a helical span at residues 235–255 (YLTTYSNLCWLFGQLFAAGIM). At 256–270 (KNSQKKYADSELGYK) the chain is on the extracellular side. Residues 271–291 (LPFALQWILPVPLALGIFFAP) form a helical membrane-spanning segment. Residues 292–363 (ESPWWLVKKG…EDKINRRRTR (72 aa)) are Cytoplasmic-facing. Residues 364 to 384 (ITCLCWAGQATCGSILIGYST) form a helical membrane-spanning segment. At 385 to 397 (YFYEKAGVSTEMS) the chain is on the extracellular side. Residues 398-418 (FTFSIIQYCLGICATFLSWWA) traverse the membrane as a helical segment. Topologically, residues 419-426 (SKYFGRYD) are cytoplasmic. Residues 427-447 (LYAFGLAFQTIVFFIIGGLGC) form a helical membrane-spanning segment. The Extracellular segment spans residues 448 to 459 (SSTHGSKMGSGS). The chain crosses the membrane as a helical span at residues 460–480 (LLMAVAFFYNLGIAPVVFCLV). The Cytoplasmic portion of the chain corresponds to 481-492 (SEMPSSRLRTKT). The helical transmembrane segment at 493 to 513 (IILARNTYNVVSIICSVLILY) threads the bilayer. Topologically, residues 514–525 (QLNSKKWNWGAK) are extracellular. The chain crosses the membrane as a helical span at residues 526–546 (SGFFWGVLCFCTLIWAVVDLP). Residues 547–609 (ETAGKTFVEI…QRNSNVSHHL (63 aa)) are Cytoplasmic-facing.

This sequence belongs to the major facilitator superfamily. Sugar transporter (TC 2.A.1.1) family.

The protein localises to the cell membrane. In terms of biological role, high-affinity uptake of maltose and maltotriose. Also transports alpha-methylglucoside, glucose and turanose but not melezitose or trehalose. This is Alpha-glucosides permease MPH2 (MPH2) from Saccharomyces cerevisiae (strain ATCC 204508 / S288c) (Baker's yeast).